Reading from the N-terminus, the 185-residue chain is Peptidyl-tRNA hydrolase (185 aa).

F14 contributes to the tRNA binding site. Residue H19 is the Proton acceptor of the active site. TRNA is bound by residues Y64, N66, and N112.

It belongs to the PTH family. Monomer.

Its subcellular location is the cytoplasm. It catalyses the reaction an N-acyl-L-alpha-aminoacyl-tRNA + H2O = an N-acyl-L-amino acid + a tRNA + H(+). Its function is as follows. Hydrolyzes ribosome-free peptidyl-tRNAs (with 1 or more amino acids incorporated), which drop off the ribosome during protein synthesis, or as a result of ribosome stalling. In terms of biological role, catalyzes the release of premature peptidyl moieties from peptidyl-tRNA molecules trapped in stalled 50S ribosomal subunits, and thus maintains levels of free tRNAs and 50S ribosomes. The protein is Peptidyl-tRNA hydrolase of Exiguobacterium sp. (strain ATCC BAA-1283 / AT1b).